A 132-amino-acid polypeptide reads, in one-letter code: Homeobox protein ceh-1 (132 aa).

A DNA-binding region (homeobox) is located at residues 1–60 (MRRARTAFTYEQLVALENKFKTSRYLSVVERLNLAIQLQLSETQVKIWFQNRRTKWKKHN). A disordered region spans residues 56 to 80 (WKKHNPGQDANTPQTPPSSDETQIQ). The segment covering 63-80 (QDANTPQTPPSSDETQIQ) has biased composition (polar residues).

Its subcellular location is the nucleus. This chain is Homeobox protein ceh-1 (ceh-1), found in Caenorhabditis elegans.